Here is a 170-residue protein sequence, read N- to C-terminus: Cathelicidin antimicrobial peptide (170 aa).

The N-terminal stretch at 1 to 30 (MKTQRHGPSLGRWSLVLLLLGLVMPLAIVA) is a signal peptide. The propeptide at 31–131 (QVLSYQEAVL…DISCDKDNRR (101 aa)) is cathelin-like domain (CLD). 2 cysteine pairs are disulfide-bonded: cysteine 86–cysteine 97 and cysteine 108–cysteine 125. An active core region spans residues 150 to 162 (LKKIGQKIKDFWG).

The protein belongs to the cathelicidin family. Monomer, homodimer or homotrimer (in vitro). Oligomerizes as tetra- or hexamer in solution (in vitro). Post-translationally, proteolytically cleaved by proteinase PRTN3 into antibacterial peptide LL-37. Proteolytically cleaved by cathepsin CTSG and neutrophil elastase ELANE. Resistant to proteolytic degradation in solution, and when bound to both zwitterionic (mimicking mammalian membranes) and negatively charged membranes (mimicking bacterial membranes). In terms of processing, after secretion onto the skin surface, the CAMP gene product is processed by a serine protease-dependent mechanism into multiple novel antimicrobial peptides distinct from and shorter than cathelicidin LL-37. These peptides show enhanced antimicrobial action, acquiring the ability to kill skin pathogens such as S.aureus, E.coli and C.albicans. These peptides have lost the ability to stimulate CXCL8/IL8 release from keratinocytes. The peptides act synergistically, killing bacteria at lower concentrations when present together, and maintain activity at increased salt condition.

Its subcellular location is the secreted. It is found in the vesicle. Its function is as follows. Antimicrobial protein that is an integral component of the innate immune system. Binds to bacterial lipopolysaccharides (LPS). Acts via neutrophil N-formyl peptide receptors to enhance the release of CXCL2. Postsecretory processing generates multiple cathelicidin antimicrobial peptides with various lengths which act as a topical antimicrobial defense in sweat on skin. The unprocessed precursor form, cathelicidin antimicrobial peptide, inhibits the growth of Gram-negative E.coli and E.aerogenes with efficiencies comparable to that of the mature peptide LL-37 (in vitro). In terms of biological role, antimicrobial peptide that is an integral component of the innate immune system. Binds to bacterial lipopolysaccharides (LPS). Causes membrane permeabilization by forming transmembrane pores (in vitro). Causes lysis of E.coli. Exhibits antimicrobial activity against Gram-negative bacteria such as P.aeruginosa, S.typhimurium, E.aerogenes, E.coli and P.syringae, Gram-positive bacteria such as L.monocytogenes, S.epidermidis, S.pyogenes and S.aureus, as well as vancomycin-resistant enterococci (in vitro). Exhibits antimicrobial activity against methicillin-resistant S.aureus, P.mirabilis, and C.albicans in low-salt media, but not in media containing 100 mM NaCl (in vitro). Forms chiral supramolecular assemblies with quinolone signal (PQS) molecules of P.aeruginosa, which may lead to interference of bacterial quorum signaling and perturbance of bacterial biofilm formation. May form supramolecular fiber-like assemblies on bacterial membranes. Induces cytokine and chemokine producation as well as TNF/TNFA and CSF2/GMCSF production in normal human keratinocytes. Exhibits hemolytic activity against red blood cells. Functionally, exhibits antimicrobial activity against E.coli and B.megaterium (in vitro). In Trachypithecus cristatus (Silvered leaf-monkey), this protein is Cathelicidin antimicrobial peptide.